The sequence spans 155 residues: Ribosome maturation factor RimP (155 aa).

Belongs to the RimP family.

The protein resides in the cytoplasm. In terms of biological role, required for maturation of 30S ribosomal subunits. The chain is Ribosome maturation factor RimP from Synechococcus sp. (strain RCC307).